Consider the following 479-residue polypeptide: Glycogen synthase (479 aa).

K15 contributes to the ADP-alpha-D-glucose binding site.

Belongs to the glycosyltransferase 1 family. Bacterial/plant glycogen synthase subfamily.

The enzyme catalyses [(1-&gt;4)-alpha-D-glucosyl](n) + ADP-alpha-D-glucose = [(1-&gt;4)-alpha-D-glucosyl](n+1) + ADP + H(+). It functions in the pathway glycan biosynthesis; glycogen biosynthesis. Functionally, synthesizes alpha-1,4-glucan chains using ADP-glucose. In Pectobacterium atrosepticum (strain SCRI 1043 / ATCC BAA-672) (Erwinia carotovora subsp. atroseptica), this protein is Glycogen synthase.